A 96-amino-acid chain; its full sequence is YcgL domain-containing protein Csal_1462 (96 aa).

Positions 4–88 constitute a YcgL domain; that stretch reads RLCEIFKSPR…ARESYLLDLY (85 aa).

The polypeptide is YcgL domain-containing protein Csal_1462 (Chromohalobacter salexigens (strain ATCC BAA-138 / DSM 3043 / CIP 106854 / NCIMB 13768 / 1H11)).